The chain runs to 782 residues: Translation initiation factor IF-2 (782 aa).

A compositionally biased stretch (basic and acidic residues) spans 1-14; it reads MSKNIDDKNEDGKK. Disordered stretches follow at residues 1–106 and 132–174; these read MSKN…KKTY and SIVS…AETE. The span at 15-25 shows a compositional bias: basic residues; the sequence is IKIIKLRKKVV. Residues 31–43 show a composition bias toward polar residues; that stretch reads NDLSGKNNPSGST. The segment covering 44-61 has biased composition (basic and acidic residues); sequence DLHKHNNKVEYSHSRDGR. Composition is skewed to polar residues over residues 86–106 and 133–142; these read GYSQ…KKTY and IVSSASSTDS. Residues 143 to 159 are compositionally biased toward basic and acidic residues; the sequence is ENSKELNRKLGEKKKQQ. The region spanning 280 to 453 is the tr-type G domain; sequence EKPPVITIMG…DMMLLKANPS (174 aa). The tract at residues 289 to 296 is G1; that stretch reads GHVDHGKT. 289 to 296 lines the GTP pocket; that stretch reads GHVDHGKT. Positions 314-318 are G2; that stretch reads GITQH. Positions 335–338 are G3; the sequence is DTPG. GTP is bound by residues 335–339 and 389–392; these read DTPGH and NKID. The tract at residues 389–392 is G4; the sequence is NKID. Residues 425 to 427 are G5; the sequence is SAL.

Belongs to the TRAFAC class translation factor GTPase superfamily. Classic translation factor GTPase family. IF-2 subfamily.

It is found in the cytoplasm. Functionally, one of the essential components for the initiation of protein synthesis. Protects formylmethionyl-tRNA from spontaneous hydrolysis and promotes its binding to the 30S ribosomal subunits. Also involved in the hydrolysis of GTP during the formation of the 70S ribosomal complex. This chain is Translation initiation factor IF-2, found in Borreliella afzelii (strain PKo) (Borrelia afzelii).